Consider the following 251-residue polypeptide: Small ribosomal subunit protein uS3 (251 aa).

In terms of domain architecture, KH type-2 spans 39-109 (IRNYVQARLK…EVKIDVIEVI (71 aa)). A compositionally biased stretch (basic and acidic residues) spans 222–239 (LKKIKDRRGEQRSRGRDS). The tract at residues 222 to 251 (LKKIKDRRGEQRSRGRDSRNRRRRKPRQTT) is disordered. Residues 240–251 (RNRRRRKPRQTT) are compositionally biased toward basic residues.

The protein belongs to the universal ribosomal protein uS3 family. As to quaternary structure, part of the 30S ribosomal subunit. Forms a tight complex with proteins S10 and S14.

In terms of biological role, binds the lower part of the 30S subunit head. Binds mRNA in the 70S ribosome, positioning it for translation. The polypeptide is Small ribosomal subunit protein uS3 (Prosthecochloris aestuarii (strain DSM 271 / SK 413)).